Reading from the N-terminus, the 2222-residue chain is DNA polymerase epsilon catalytic subunit A (2222 aa).

The tract at residues 90-110 (ETLSSGSNGGGNSNDGERVTT) is disordered. Positions 2108, 2111, 2130, and 2133 each coordinate Zn(2+). A CysA-type zinc finger spans residues 2108–2133 (CEYCFFISDIDFCKAAPESIFSCVRC). Residues Cys2164, Cys2167, Cys2179, and Cys2181 each contribute to the [4Fe-4S] cluster site. The short motif at 2164 to 2181 (CSRCHKVKRDYMSAHCPC) is the CysB motif element.

It belongs to the DNA polymerase type-B family. DNA polymerase epsilon is a heterotetramer consisting of POL2, DPB2, DPB3 and DPB4. [4Fe-4S] cluster is required as a cofactor.

Its subcellular location is the nucleus. The catalysed reaction is DNA(n) + a 2'-deoxyribonucleoside 5'-triphosphate = DNA(n+1) + diphosphate. Catalytic component of the DNA polymerase epsilon complex which participates in chromosomal DNA replication. Required during synthesis of the leading DNA strands at the replication fork, binds at/or near replication origins and moves along DNA with the replication fork. Has 3'-5' proofreading exonuclease activity that corrects errors arising during DNA replication. This Saccharomyces cerevisiae (strain ATCC 204508 / S288c) (Baker's yeast) protein is DNA polymerase epsilon catalytic subunit A (POL2).